Here is a 683-residue protein sequence, read N- to C-terminus: DNA-directed RNA polymerase subunit beta' (683 aa).

4 residues coordinate Zn(2+): cysteine 69, cysteine 71, cysteine 87, and cysteine 90. Aspartate 489, aspartate 491, and aspartate 493 together coordinate Mg(2+).

This sequence belongs to the RNA polymerase beta' chain family. RpoC1 subfamily. As to quaternary structure, in plastids the minimal PEP RNA polymerase catalytic core is composed of four subunits: alpha, beta, beta', and beta''. When a (nuclear-encoded) sigma factor is associated with the core the holoenzyme is formed, which can initiate transcription. Requires Mg(2+) as cofactor. It depends on Zn(2+) as a cofactor.

It localises to the plastid. It is found in the chloroplast. The enzyme catalyses RNA(n) + a ribonucleoside 5'-triphosphate = RNA(n+1) + diphosphate. Its function is as follows. DNA-dependent RNA polymerase catalyzes the transcription of DNA into RNA using the four ribonucleoside triphosphates as substrates. The protein is DNA-directed RNA polymerase subunit beta' of Zea mays (Maize).